A 164-amino-acid polypeptide reads, in one-letter code: NADH-quinone oxidoreductase subunit I (164 aa).

4Fe-4S ferredoxin-type domains are found at residues 55–84 (RRYEGGEERCVACKLCEAICPAQAIYIEID) and 95–124 (KVYDIDLFKCIYCGLCEEACPVEAIVMGPY). Residues Cys-64, Cys-67, Cys-70, Cys-74, Cys-104, Cys-107, Cys-110, and Cys-114 each coordinate [4Fe-4S] cluster.

Belongs to the complex I 23 kDa subunit family. In terms of assembly, NDH-1 is composed of 14 different subunits. Subunits NuoA, H, J, K, L, M, N constitute the membrane sector of the complex. It depends on [4Fe-4S] cluster as a cofactor.

It localises to the cell inner membrane. It carries out the reaction a quinone + NADH + 5 H(+)(in) = a quinol + NAD(+) + 4 H(+)(out). Functionally, NDH-1 shuttles electrons from NADH, via FMN and iron-sulfur (Fe-S) centers, to quinones in the respiratory chain. The immediate electron acceptor for the enzyme in this species is believed to be ubiquinone. Couples the redox reaction to proton translocation (for every two electrons transferred, four hydrogen ions are translocated across the cytoplasmic membrane), and thus conserves the redox energy in a proton gradient. This chain is NADH-quinone oxidoreductase subunit I, found in Magnetococcus marinus (strain ATCC BAA-1437 / JCM 17883 / MC-1).